Consider the following 75-residue polypeptide: DNA-directed RNA polymerase subunit epsilon (75 aa).

The protein belongs to the RNA polymerase subunit epsilon family. RNAP is composed of a core of 2 alpha, a beta and a beta' subunit. The core is associated with a delta subunit, and at least one of epsilon or omega. When a sigma factor is associated with the core the holoenzyme is formed, which can initiate transcription.

The enzyme catalyses RNA(n) + a ribonucleoside 5'-triphosphate = RNA(n+1) + diphosphate. A non-essential component of RNA polymerase (RNAP). This Lactobacillus johnsonii (strain CNCM I-12250 / La1 / NCC 533) protein is DNA-directed RNA polymerase subunit epsilon.